The following is a 216-amino-acid chain: UPF0502 protein Spea_2482 (216 aa).

This sequence belongs to the UPF0502 family.

This is UPF0502 protein Spea_2482 from Shewanella pealeana (strain ATCC 700345 / ANG-SQ1).